We begin with the raw amino-acid sequence, 331 residues long: GTP 3',8-cyclase (331 aa).

The Radical SAM core domain occupies 9–233 (SFGRQVTYVR…TATNEHTGGP (225 aa)). Arg18 contacts GTP. Positions 25 and 29 each coordinate [4Fe-4S] cluster. Tyr31 contacts S-adenosyl-L-methionine. Cys32 serves as a coordination point for [4Fe-4S] cluster. Residue Arg67 participates in GTP binding. An S-adenosyl-L-methionine-binding site is contributed by Gly71. Thr98 is a GTP binding site. Ser122 serves as a coordination point for S-adenosyl-L-methionine. Lys159 is a GTP binding site. Met193 contributes to the S-adenosyl-L-methionine binding site. [4Fe-4S] cluster contacts are provided by Cys257 and Cys260. 262-264 (RVR) lines the GTP pocket. [4Fe-4S] cluster is bound at residue Cys274.

This sequence belongs to the radical SAM superfamily. MoaA family. As to quaternary structure, monomer and homodimer. Requires [4Fe-4S] cluster as cofactor.

The enzyme catalyses GTP + AH2 + S-adenosyl-L-methionine = (8S)-3',8-cyclo-7,8-dihydroguanosine 5'-triphosphate + 5'-deoxyadenosine + L-methionine + A + H(+). It participates in cofactor biosynthesis; molybdopterin biosynthesis. Its function is as follows. Catalyzes the cyclization of GTP to (8S)-3',8-cyclo-7,8-dihydroguanosine 5'-triphosphate. The protein is GTP 3',8-cyclase of Saccharophagus degradans (strain 2-40 / ATCC 43961 / DSM 17024).